A 126-amino-acid chain; its full sequence is MIVIFVGLAGVLGALMRFGLDSFFAQRGRFAHGQAHHFPLATLSVNVLGSFIIGLAGGFASHAELSPDWHSAISIGIAGGLTTFSSFAVATVSLWQLGNKFSAMVNIGLNLVLGLGAAWLGLSLAA.

Transmembrane regions (helical) follow at residues 1–21, 40–60, 72–92, and 104–124; these read MIVI…FGLD, LATL…GGFA, AISI…VATV, and MVNI…GLSL. Na(+) is bound by residues G79 and T82.

This sequence belongs to the fluoride channel Fluc/FEX (TC 1.A.43) family.

Its subcellular location is the cell membrane. It carries out the reaction fluoride(in) = fluoride(out). With respect to regulation, na(+) is not transported, but it plays an essential structural role and its presence is essential for fluoride channel function. Its function is as follows. Fluoride-specific ion channel. Important for reducing fluoride concentration in the cell, thus reducing its toxicity. This is Fluoride-specific ion channel FluC from Renibacterium salmoninarum (strain ATCC 33209 / DSM 20767 / JCM 11484 / NBRC 15589 / NCIMB 2235).